Here is a 742-residue protein sequence, read N- to C-terminus: Photosystem I P700 chlorophyll a apoprotein A2 (742 aa).

Helical transmembrane passes span L46–A69, L135–Q158, L175–I199, I273–Y291, L336–G359, S375–V401, A423–H445, and F525–I543. [4Fe-4S] cluster is bound by residues C567 and C576. Transmembrane regions (helical) follow at residues A583–W604 and L651–I673. Divinyl chlorophyll a-binding residues include H662, M670, and Y678. W679 contributes to the phylloquinone binding site. The helical transmembrane segment at L715 to A735 threads the bilayer.

It belongs to the PsaA/PsaB family. As to quaternary structure, the PsaA/B heterodimer binds the P700 divinyl chlorophyll special pair and subsequent electron acceptors. PSI consists of a core antenna complex that captures photons, and an electron transfer chain that converts photonic excitation into a charge separation. The cyanobacterial PSI reaction center is composed of one copy each of PsaA,B,C,D,E,F,I,J,K,L,M and X, and forms trimeric complexes. The cofactor is PSI electron transfer chain: 5 divinyl chlorophyll a, 1 divinyl chlorophyll a', 2 phylloquinones and 3 4Fe-4S clusters. PSI core antenna: 90 divinyl chlorophyll a, 22 carotenoids, 3 phospholipids and 1 galactolipid. P700 is a divinyl chlorophyll a/divinyl chlorophyll a' dimer, A0 is one or more divinyl chlorophyll a, A1 is one or both phylloquinones and FX is a shared 4Fe-4S iron-sulfur center..

The protein localises to the cellular thylakoid membrane. The enzyme catalyses reduced [plastocyanin] + hnu + oxidized [2Fe-2S]-[ferredoxin] = oxidized [plastocyanin] + reduced [2Fe-2S]-[ferredoxin]. PsaA and PsaB bind P700, the primary electron donor of photosystem I (PSI), as well as the electron acceptors A0, A1 and FX. PSI is a plastocyanin/cytochrome c6-ferredoxin oxidoreductase, converting photonic excitation into a charge separation, which transfers an electron from the donor P700 chlorophyll pair to the spectroscopically characterized acceptors A0, A1, FX, FA and FB in turn. Oxidized P700 is reduced on the lumenal side of the thylakoid membrane by plastocyanin or cytochrome c6. The polypeptide is Photosystem I P700 chlorophyll a apoprotein A2 (Prochlorococcus marinus (strain MIT 9301)).